Here is a 376-residue protein sequence, read N- to C-terminus: Chaperone protein DnaJ (376 aa).

In terms of domain architecture, J spans 5-70 (DYYEVLGVKK…QKRAAYDQYG (66 aa)). The segment at 131–209 (GVTKEIRIPT…CHGHGRVEKS (79 aa)) adopts a CR-type zinc-finger fold. Positions 144, 147, 161, 164, 183, 186, 197, and 200 each coordinate Zn(2+). CXXCXGXG motif repeat units lie at residues 144–151 (CDVCHGSG), 161–168 (CSTCRGAG), 183–190 (CPTCHGSG), and 197–204 (CNKCHGHG).

It belongs to the DnaJ family. Homodimer. Zn(2+) is required as a cofactor.

It localises to the cytoplasm. Functionally, participates actively in the response to hyperosmotic and heat shock by preventing the aggregation of stress-denatured proteins and by disaggregating proteins, also in an autonomous, DnaK-independent fashion. Unfolded proteins bind initially to DnaJ; upon interaction with the DnaJ-bound protein, DnaK hydrolyzes its bound ATP, resulting in the formation of a stable complex. GrpE releases ADP from DnaK; ATP binding to DnaK triggers the release of the substrate protein, thus completing the reaction cycle. Several rounds of ATP-dependent interactions between DnaJ, DnaK and GrpE are required for fully efficient folding. Also involved, together with DnaK and GrpE, in the DNA replication of plasmids through activation of initiation proteins. In Yersinia enterocolitica serotype O:8 / biotype 1B (strain NCTC 13174 / 8081), this protein is Chaperone protein DnaJ.